We begin with the raw amino-acid sequence, 28 residues long: Antibacterial protein LC3 (28 aa).

In terms of biological role, antibacterial activity against X.campestris, especially strain G, and P.solacearum PO1. The sequence is that of Antibacterial protein LC3 from Bacillus subtilis.